We begin with the raw amino-acid sequence, 101 residues long: Helix-loop-helix protein 17 (101 aa).

A basic motif region spans residues 14–27; sequence GVRLSINLRERCRM. The 55-residue stretch at 14–68 folds into the bHLH domain; that stretch reads GVRLSINLRERCRMHDLNEALDDLRAVIPYAHGGSVRKLSKIATLLLAKNHIIMQ. Residues 28-68 are helix-loop-helix motif; sequence HDLNEALDDLRAVIPYAHGGSVRKLSKIATLLLAKNHIIMQ.

In terms of tissue distribution, expressed in neuronal tissues of the head, including sheath cells of the cephalic sensilla (CEPsh) glia.

Its subcellular location is the nucleus. In terms of biological role, probable transcription factor that regulates the expression of dopamine receptors dop-1, dop-2 and dop-3 and thus dopamine-dependent behaviors. May act redundantly with hlh-31 and hlh-32 to regulate ventral CEPsh glia functions. May play a role in chemotactic responses in larvae. This Caenorhabditis elegans protein is Helix-loop-helix protein 17.